The chain runs to 1314 residues: MASKGAGMSFSRKSYRLTSDAEKSRVTGIVQEKLLNDYLNRIFSSSEHAPPAATSRKPLNFQNLPEHLDQLLQVDNEEEESQGQVEGRLGPSTVVLDHTGGFEGLLLVDDDLLGVIGHSNFGTIRSTTCVYKGKWLYEVLISSQGLMQIGWCTISCRFNQEEGVGDTHNSYAYDGNRVRKWNVTTTNYGKAWAAGDIVSCLIDLDDGTLSFCLNGVSLGTAFENLSRGLGMAYFPAISLSFKESVAFNFGSRPLRYPVAGYRPLQDPPSADLVRAQRLLGCFRAVLSVELDPVEGRLLDKESSKWRLRGQPTVLLTLAHIFHHFAPLLRKVYLVEAVLMSFLLGIVEKGTPTQAQSVVHQVLDLLWLFMEDYEVQDCLKQLMMSLLRLYRFSPIVPDLGLQIHYLRLTIAILRHEKSRKFLLSNVLFDVLRSVVFFYIKSPLRVEEAGLQELIPTTWWPHCSSREGKESTEMKEETAEERLRRRAYERGCQRLRKRIEVVEELQVQILKLLLDNKDDNGGEASRYIFLTKFRKFLQENASGRGNMPMLCPPEYMVCFLHRLISALRYYWDEYKASNPHASFSEEAYIPPQVFYNGKVDYFDLQRLGGLLSHLRKTLKDDLASKANIVIDPLELQSTAMDDLDEDEEPAPAMAQRPMQALAVGGPLPLPRPGWLSSPTLGRANRFLSTAAVSLMTPRRPLSTSEKVKVRTLSVEQRTREDIEGSHWNEGLLLGRPPEEPEQPLTENSLLEVLDGAVMMYNLSVHQQLGKMVGVSDDVNEYAMALRDTEDKLRRCPKRRKDILAELTKSQKVFSEKLDHLSRRLAWVHATVYSQEKMLDIYWLLRVCLRTIEHGDRTGSLFAFMPEFYLSVAINSYSALKNYFGPVHSMEELPGYEETLTRLAAILAKHFADARIVGTDIRDSLMQALASYVCYPHSLRAVERIPEEQRIAMVRNLLAPYEQRPWAQTNWILVRLWRGCGFGYRYTRLPHLLKTKLEDANLPSLQKPCPSTLLQQHMADLLQQGPDVAPSFLNSVLNQLNWAFSEFIGMIQEIQQAAERLERNFVDSRQLKVCATCFDLSVSLLRVLEMTITLVPEIFLDWTRPTSEMLLRRLAQLLNQVLNRVTAERNLFDRVVTLRLPGLESVDHYPILVAVTGILVQLLVRGPASEREQATSVLLADPCFQLRSICYLLGQPEPPAPGTALPAPDRKRFSLQSYADYISADELAQVEQMLAHLTSASAQAAAASLPTSEEDLCPICYAHPISAVFQPCGHKSCKACINQHLMNNKDCFFCKTTIVSVEDWEKGANTSTTSSAA.

An N-acetylalanine modification is found at Ala-2. Residues 74-254 (VDNEEEESQG…VAFNFGSRPL (181 aa)) form the B30.2/SPRY domain. Ser-675 bears the Phosphoserine mark. Arg-683 is subject to Asymmetric dimethylarginine. The segment at 968 to 974 (WILVRLW) is interaction with NFKB1. 8 residues coordinate Zn(2+): Cys-1254, Cys-1257, Cys-1269, His-1271, Cys-1274, Cys-1277, Cys-1288, and Cys-1291. The segment at 1254 to 1292 (CPICYAHPISAVFQPCGHKSCKACINQHLMNNKDCFFCK) adopts an RING-type zinc-finger fold.

In terms of assembly, component of the KPC complex composed of RNF123/KPC1 and UBAC1/KPC2. Interacts with UBAC1 and CDKN1B via its N-terminal domain. Interacts with RIGI (via N-terminus) and IFIH1 (via N-terminus). Post-translationally, ubiquitinated, leading to its degradation. Deubiquitinated by USP19, thereby stimulating CDKN1B ubiquitin-dependent degradation.

It localises to the cytoplasm. The enzyme catalyses S-ubiquitinyl-[E2 ubiquitin-conjugating enzyme]-L-cysteine + [acceptor protein]-L-lysine = [E2 ubiquitin-conjugating enzyme]-L-cysteine + N(6)-ubiquitinyl-[acceptor protein]-L-lysine.. It participates in protein modification; protein ubiquitination. Catalytic subunit of the KPC complex that acts as E3 ubiquitin-protein ligase. Promotes the ubiquitination and proteasome-mediated degradation of CDKN1B which is the cyclin-dependent kinase inhibitor at the G0-G1 transition of the cell cycle. Also acts as a key regulator of the NF-kappa-B signaling by promoting maturation of the NFKB1 component of NF-kappa-B: acts by catalyzing ubiquitination of the NFKB1 p105 precursor, leading to limited proteasomal degradation of NFKB1 p105 and generation of the active NFKB1 p50 subunit. Also functions as an inhibitor of innate antiviral signaling mediated by RIGI and IFIH1 independently of its E3 ligase activity. Interacts with the N-terminal CARD domains of RIGI and IFIH1 and competes with the downstream adapter MAVS. This is E3 ubiquitin-protein ligase RNF123 from Homo sapiens (Human).